Here is a 390-residue protein sequence, read N- to C-terminus: MAEDGSPKIYSRPPRDSSKTPTEADIFFGADNTIPKSETTITSEGDHITSVNDCTADGDFSTTVNKLTPTKEKLKLEEDIEASLKSTTLPEKEITTPTETTNSKPKESITENFIPVKIGNISSPVGTVSLIDFSSNMAKEDILLATIDAEDKEVKPTTELSETQEDSSANDEDTSVPPDENTETDVSSSTSSDVPDDGAVQVTDSFSPESDVPPSTEKEVTTIPDNVAEDKVTKIDLIVSEDRPKTVTKLSDSEEEKFITVFELTNSAEKAKDNPEDPLTDEEPADGVNTWVEKDAANEAESHAVLLTAVESRYDFVVTASETNSVVVEEPHVDTKNSPEKDAAESVTNVTEEFPSVTSVVEQSGNKEDLSTNDSGIFKLLKEEPDELMM.

3 disordered regions span residues 1–23 (MAEDGSPKIYSRPPRDSSKTPTE), 82–109 (ASLKSTTLPEKEITTPTETTNSKPKESI), and 146–225 (TIDA…TIPD). Over residues 162–174 (ETQEDSSANDEDT) the composition is skewed to acidic residues. The span at 184 to 193 (TDVSSSTSSD) shows a compositional bias: low complexity. Phosphoserine occurs at positions 251 and 267. Residue Thr-280 is modified to Phosphothreonine; by CK2. Ser-312 carries the post-translational modification Phosphoserine. Positions 330–344 (EPHVDTKNSPEKDAA) are enriched in basic and acidic residues. Positions 330–390 (EPHVDTKNSP…LKEEPDELMM (61 aa)) are disordered. Phosphoserine is present on residues Ser-346, Ser-356, Ser-371, and Ser-375. Polar residues predominate over residues 346 to 364 (SVTNVTEEFPSVTSVVEQS).

In terms of tissue distribution, expressed in seminiferous tubules of the testis in step 10 spermatids (stage X), subsequently increasing to reach maximal levels of step 18 elongated spermatids (stage VI) (at protein level). Strongly expressed in testis. Weakly expressed in olfactory epithelium. Expressed in spermatids of seminiferous tubules at steps 4-14 (stages IV to XIV of the seminiferous epithelium classification).

It is found in the cytoplasm. It localises to the mitochondrion inner membrane. The protein resides in the cell projection. The protein localises to the cilium. Its subcellular location is the flagellum. It is found in the cytoplasmic vesicle. It localises to the secretory vesicle. The protein resides in the acrosome. In terms of biological role, calcium-binding protein. Essential for maintaining the structural integrity of the sperm flagella. The sequence is that of Calcium-binding and spermatid-specific protein 1 (Cabs1) from Rattus norvegicus (Rat).